Consider the following 757-residue polypeptide: MDVNPTLLFLKVPAQNAISTTFPYTGDPPYSHGTGTGYTMDTVNRTHQYSEKGKWTTNTETGAPQLNPIDGPLPEDNEPSGYAQTDCVLEAMAFLEKSHPGIFENSCLETMEIVQQTRVDKLTQGRQTYDWTLNRNQPAATALANTIEVFRSNGLTANESGRLIDFLKDVMESMDKGEMEITTHFQRKRRVRDNMTKKMVTQRTIGKKKQRLNKRSYLIRALTLNTMTKDAERGKLKRRAIATPGMQIRGFVYFVETLARSICEKLEQSGLPVGGNEKKAKLANVVRKMMTNSQDTELSFTITGDNTKWNENQNPRMFLAMITYITRKQPEWFRNVLSIAPIMFSNKMARLGKGYMFESKSMKLRTQIPAEMLASIDLKYFNESTRKKIEKIRPLLIDGTASLSPGMMMGMFNMLSTVLGVSILNLGQKRYTKTTYWWDGLQSSDDFALIVNAPNHEGIQAGVDRFYRTCKLVGINMSKKKSYINRTGTFEFTSFFYRYGFVANFSMELPSFGVSGINESADMSIGVTVIKNNMINNDLGPATAQMALQLFIKDYRYTYRCHRGDTQIQTGRSFELKKLWEQTRSKAGLLVSDGGPNLYNIRNLHIPEVCLKWELMDEDYQGRLCNPLNPFVSHKEIESVNNAVVMPAHGPAKSMEYDAVATTHSWVPKRNRSILNTSQRGILEDEQMYQKCCNLFEKFFPSSSYRRPVGISSMVEAMVSRARIDARIDFESGRIKKEEFAEIMKICSTIEELRRQK.

Residues 50–82 are disordered; it reads SEKGKWTTNTETGAPQLNPIDGPLPEDNEPSGY. The span at 55–64 shows a compositional bias: polar residues; that stretch reads WTTNTETGAP. 2 consecutive short sequence motifs (nuclear localization signal) follow at residues 187-195 and 203-216; these read RKRRVRDNM and RTIG…NKRS. Residues 249–256 are promoter-binding site; sequence RGFVYFVE. Residues 286 to 483 form the RdRp catalytic domain; that stretch reads VRKMMTNSQD…GINMSKKKSY (198 aa).

It belongs to the influenza viruses polymerase PB1 family. As to quaternary structure, influenza RNA polymerase is composed of three subunits: PB1, PB2 and PA. Interacts (via N-terminus) with PA (via C-terminus). Interacts (via C-terminus) with PB2 (via N-terminus); this interaction is essential for transcription initiation. Post-translationally, phosphorylated by host PRKCA.

The protein resides in the host nucleus. The protein localises to the host cytoplasm. It catalyses the reaction RNA(n) + a ribonucleoside 5'-triphosphate = RNA(n+1) + diphosphate. Functionally, RNA-dependent RNA polymerase which is responsible for replication and transcription of virus RNA segments. The transcription of viral mRNAs occurs by a unique mechanism called cap-snatching. 5' methylated caps of cellular mRNAs are cleaved after 10-13 nucleotides by PA. In turn, these short capped RNAs are used as primers by PB1 for transcription of viral mRNAs. During virus replication, PB1 initiates RNA synthesis and copy vRNA into complementary RNA (cRNA) which in turn serves as a template for the production of more vRNAs. The protein is RNA-directed RNA polymerase catalytic subunit of Influenza A virus (strain A/Chicken/Hong Kong/715.5/2001 H5N1 genotype E).